We begin with the raw amino-acid sequence, 723 residues long: E3 ubiquitin-protein ligase LRSAM1 (723 aa).

LRR repeat units follow at residues 30–51 (ADDILDISKCELSEIPFGAFAT), 56–77 (QKKVLIVHTNHLTSLLPKSCSL), 82–103 (TIKVLDLHDNQLTALPDDLGQL), 105–127 (ALQVLNVERNQLMQLPRSIGNLT), 128–149 (QLQTLNVKDNKLKELPDTVGEL), and 151–172 (SLRTLNISGNEIQRLPQMLAHV). Ser-234 carries the phosphoserine modification. Coiled-coil stretches lie at residues 254-380 (SDYE…TESL) and 510-562 (ALSS…KPLS). Residues 282–314 (TQLLQQSSSQKDEILQTVKEEQSRLEQGLSEHQ) form a disordered region. A compositionally biased stretch (basic and acidic residues) spans 291–314 (QKDEILQTVKEEQSRLEQGLSEHQ). In terms of domain architecture, SAM spans 569–632 (GMERQLVALL…LRRVQELLDA (64 aa)). Ser-604 bears the Phosphoserine mark. Positions 642–665 (PMGEVVTPTAPQEPPESVRPSAPP) are disordered. 2 consecutive short sequence motifs (PTAP motif) follow at residues 649–652 (PTAP) and 661–664 (PSAP). The RING-type zinc finger occupies 675 to 710 (CVVCLEREAQMIFLNCGHVCCCQQCCQPLRTCPLCR).

Interacts with TSG101. Interacts with PHF23. Interacts with FUS. Ubiquitination promoted by PHF23 leads to proteasomal degradation. As to expression, highly expressed in adult spinal cord motoneurons as well as in fetal spinal cord and muscle tissue.

Its subcellular location is the cytoplasm. It carries out the reaction S-ubiquitinyl-[E2 ubiquitin-conjugating enzyme]-L-cysteine + [acceptor protein]-L-lysine = [E2 ubiquitin-conjugating enzyme]-L-cysteine + N(6)-ubiquitinyl-[acceptor protein]-L-lysine.. The protein operates within protein modification; protein ubiquitination. In terms of biological role, E3 ubiquitin-protein ligase that mediates monoubiquitination of TSG101 at multiple sites, leading to inactivate the ability of TSG101 to sort endocytic (EGF receptors) and exocytic (HIV-1 viral proteins) cargos. Bacterial recognition protein that defends the cytoplasm from invasive pathogens. Localizes to several intracellular bacterial pathogens and generates the bacteria-associated ubiquitin signal leading to autophagy-mediated intracellular bacteria degradation (xenophagy). The chain is E3 ubiquitin-protein ligase LRSAM1 from Homo sapiens (Human).